The primary structure comprises 844 residues: Penicillin-binding protein 1B (844 aa).

Residues 1 to 10 show a composition bias toward basic and acidic residues; it reads MAGNDREPIG. Positions 1-60 are disordered; that stretch reads MAGNDREPIGRKGKPTRPVKQKVSRRRYEDDDDYDDYDDYEDEEPMPRKGKGKGKGRKPR. Residues 1-63 are Cytoplasmic-facing; the sequence is MAGNDREPIG…GKGRKPRGKR (63 aa). Basic residues predominate over residues 11–25; it reads RKGKPTRPVKQKVSR. Residues 30–44 show a composition bias toward acidic residues; that stretch reads DDDDYDDYDDYEDEE. Residues 48–60 show a composition bias toward basic residues; that stretch reads RKGKGKGKGRKPR. Residues 64-87 traverse the membrane as a helical; Signal-anchor for type II membrane protein segment; it reads GWLWLLLKLAIVFAVLIAIYGVYL. A membrane association region spans residues 88–250; it reads DQKIRSRIDG…DGISLYSIGR (163 aa). Residues 88 to 844 are Periplasmic-facing; the sequence is DQKIRSRIDG…GWIKDMFGSN (757 aa). A uvrB domain 2 homolog region spans residues 109–200; that stretch reads RMVNLEPDMT…QFGFFRLDPR (92 aa). The tract at residues 195–367 is transglycosylase; the sequence is FRLDPRLITM…SIYNPWRNPK (173 aa). Residue Glu-233 is the Proton donor; for transglycosylase activity of the active site. The transpeptidase stretch occupies residues 444–736; that stretch reads SVAQDAAEKA…NNQPTKLYGA (293 aa). The Acyl-ester intermediate; for transpeptidase activity role is filled by Ser-510. Low complexity predominate over residues 793–825; sequence LCQQSEMQQQPSGNPFDQSSQPQQQPQQQPAQQ. The disordered stretch occupies residues 793-835; the sequence is LCQQSEMQQQPSGNPFDQSSQPQQQPQQQPAQQEQKDSDGVAG.

This sequence in the N-terminal section; belongs to the glycosyltransferase 51 family. The protein in the C-terminal section; belongs to the transpeptidase family. Forms a trimeric complex with MipA and MltA. Has also been shown to exist as monomer or homodimer; homodimer of Alpha and Gamma isozymes can be found. Interacts with UvrA, FtsL and FtsN.

Its subcellular location is the cell inner membrane. The catalysed reaction is [GlcNAc-(1-&gt;4)-Mur2Ac(oyl-L-Ala-gamma-D-Glu-L-Lys-D-Ala-D-Ala)](n)-di-trans,octa-cis-undecaprenyl diphosphate + beta-D-GlcNAc-(1-&gt;4)-Mur2Ac(oyl-L-Ala-gamma-D-Glu-L-Lys-D-Ala-D-Ala)-di-trans,octa-cis-undecaprenyl diphosphate = [GlcNAc-(1-&gt;4)-Mur2Ac(oyl-L-Ala-gamma-D-Glu-L-Lys-D-Ala-D-Ala)](n+1)-di-trans,octa-cis-undecaprenyl diphosphate + di-trans,octa-cis-undecaprenyl diphosphate + H(+). It carries out the reaction Preferential cleavage: (Ac)2-L-Lys-D-Ala-|-D-Ala. Also transpeptidation of peptidyl-alanyl moieties that are N-acyl substituents of D-alanine.. The protein operates within cell wall biogenesis; peptidoglycan biosynthesis. Functionally, cell wall formation. Synthesis of cross-linked peptidoglycan from the lipid intermediates. The enzyme has a penicillin-insensitive transglycosylase N-terminal domain (formation of linear glycan strands) and a penicillin-sensitive transpeptidase C-terminal domain (cross-linking of the peptide subunits). This Escherichia coli (strain K12) protein is Penicillin-binding protein 1B (mrcB).